Consider the following 243-residue polypeptide: Probable 2-phosphosulfolactate phosphatase (243 aa).

It belongs to the ComB family. Mg(2+) serves as cofactor.

It carries out the reaction (2R)-O-phospho-3-sulfolactate + H2O = (2R)-3-sulfolactate + phosphate. The chain is Probable 2-phosphosulfolactate phosphatase from Prochlorococcus marinus (strain SARG / CCMP1375 / SS120).